Consider the following 71-residue polypeptide: Large ribosomal subunit protein bL31 (71 aa).

Zn(2+)-binding residues include Cys-16, Cys-18, Cys-37, and Cys-40.

This sequence belongs to the bacterial ribosomal protein bL31 family. Type A subfamily. As to quaternary structure, part of the 50S ribosomal subunit. Zn(2+) is required as a cofactor.

Functionally, binds the 23S rRNA. This is Large ribosomal subunit protein bL31 from Serratia proteamaculans (strain 568).